Here is a 98-residue protein sequence, read N- to C-terminus: Small ribosomal subunit protein bS18 (98 aa).

It belongs to the bacterial ribosomal protein bS18 family. As to quaternary structure, part of the 30S ribosomal subunit. Forms a tight heterodimer with protein bS6.

Functionally, binds as a heterodimer with protein bS6 to the central domain of the 16S rRNA, where it helps stabilize the platform of the 30S subunit. The protein is Small ribosomal subunit protein bS18 of Flavobacterium johnsoniae (strain ATCC 17061 / DSM 2064 / JCM 8514 / BCRC 14874 / CCUG 350202 / NBRC 14942 / NCIMB 11054 / UW101) (Cytophaga johnsonae).